The primary structure comprises 561 residues: uncharacterized protein (561 aa).

2 helical membrane-spanning segments follow: residues 29–49 (FIFN…KKII) and 80–100 (FLFH…ASII).

It is found in the cell membrane. This is an uncharacterized protein from Mycoplasma genitalium (strain ATCC 33530 / DSM 19775 / NCTC 10195 / G37) (Mycoplasmoides genitalium).